The primary structure comprises 926 residues: Centrosomal protein of 104 kDa (926 aa).

Residues 212 to 279 are a coiled coil; it reads EVAQIIRRLD…DLAKEKKQQM (68 aa). The interval 345–419 is disordered; sequence LQEKPSASSP…RGVAGEPEPL (75 aa). A compositionally biased stretch (basic and acidic residues) spans 398 to 409; the sequence is AEVKEADSDVRR. 2 HEAT repeats span residues 522–558 and 603–639; these read THCV…ALFK and GFTV…YRQH. A coiled-coil region spans residues 678 to 730; it reads EAEVRAQKRVATKEAEKQKKEEMKALQGQSGELRETQAGVQEKESEAVKLRNQ. Basic and acidic residues-rich tracts occupy residues 690 to 701 and 718 to 729; these read KEAEKQKKEEMK and QEKESEAVKLRN. 2 disordered regions span residues 690–741 and 885–926; these read KEAE…VLPD and APQQ…YMRR. Over residues 889–903 the composition is skewed to low complexity; it reads GKGPAAAKSSTSAPK. The span at 916 to 926 shows a compositional bias: polar residues; the sequence is SKSSSRTYMRR.

Interacts with CCP110 and CEP97. Interacts with ARMC9, TOGARAM1, CCDC66 and CSPP1.

The protein localises to the cell projection. The protein resides in the cilium. It is found in the cytoplasm. It localises to the cytoskeleton. Its subcellular location is the microtubule organizing center. The protein localises to the centrosome. The protein resides in the centriole. It is found in the spindle pole. In terms of biological role, required for ciliogenesis and for structural integrity at the ciliary tip. This is Centrosomal protein of 104 kDa (Cep104) from Mus musculus (Mouse).